An 88-amino-acid chain; its full sequence is Small ribosomal subunit protein uS15 (88 aa).

Over residues 1–20 (MLTTQDKQNIIKENQQSEGD) the composition is skewed to polar residues. A disordered region spans residues 1–24 (MLTTQDKQNIIKENQQSEGDTGSP).

It belongs to the universal ribosomal protein uS15 family. Part of the 30S ribosomal subunit. Forms a bridge to the 50S subunit in the 70S ribosome, contacting the 23S rRNA.

Functionally, one of the primary rRNA binding proteins, it binds directly to 16S rRNA where it helps nucleate assembly of the platform of the 30S subunit by binding and bridging several RNA helices of the 16S rRNA. Forms an intersubunit bridge (bridge B4) with the 23S rRNA of the 50S subunit in the ribosome. This Francisella philomiragia subsp. philomiragia (strain ATCC 25017 / CCUG 19701 / FSC 153 / O#319-036) protein is Small ribosomal subunit protein uS15.